The primary structure comprises 230 residues: Exosome complex component Rrp4 (230 aa).

The S1 motif domain occupies 60–129 (NDKVIGKVID…EIKESWLSLK (70 aa)). Residues 137–195 (EEGSIIYIKAPKVPRVIGKAGNMINMIKSETNTKIIVGQNGLIWIDGEPENVDLAINAI) enclose the KH domain.

This sequence belongs to the RRP4 family. In terms of assembly, component of the archaeal exosome complex. Forms a trimer of Rrp4 and/or Csl4 subunits. The trimer associates with a hexameric ring-like arrangement composed of 3 Rrp41-Rrp42 heterodimers.

The protein localises to the cytoplasm. Its function is as follows. Non-catalytic component of the exosome, which is a complex involved in RNA degradation. Increases the RNA binding and the efficiency of RNA degradation. Confers strong poly(A) specificity to the exosome. This chain is Exosome complex component Rrp4, found in Picrophilus torridus (strain ATCC 700027 / DSM 9790 / JCM 10055 / NBRC 100828 / KAW 2/3).